Consider the following 251-residue polypeptide: MAEPRTLVLLRHGNSDWNQKNLFTGWVDVELSEQGVAEGQRAGELLAESGILPDVLHTSVLIRAIDTANIALKRAGRSWIPVQRTWRLNERHYGALQGKDKAQTLAEYGPEQFATWRRSFDVPPPPIADDDEYSQSADPRYADLGDTLPRTECLKDVIERMLPYWESDIQPDLASGRTVLVTAHGNSLRALVKHLDGISDADIAELNIPTGIPLVYRLDEDFRPIVPGGEYLDPEAAAAGAAAVAAQGSKK.

Substrate is bound by residues 11–18, 24–25, arginine 63, 90–93, lysine 101, 117–118, and 185–186; these read RHGNSDWN, TG, ERHY, RR, and GN. Catalysis depends on histidine 12, which acts as the Tele-phosphohistidine intermediate. The active-site Proton donor/acceptor is the glutamate 90.

The protein belongs to the phosphoglycerate mutase family. BPG-dependent PGAM subfamily.

The enzyme catalyses (2R)-2-phosphoglycerate = (2R)-3-phosphoglycerate. It functions in the pathway carbohydrate degradation; glycolysis; pyruvate from D-glyceraldehyde 3-phosphate: step 3/5. Its function is as follows. Catalyzes the interconversion of 2-phosphoglycerate and 3-phosphoglycerate. This Clavibacter sepedonicus (Clavibacter michiganensis subsp. sepedonicus) protein is 2,3-bisphosphoglycerate-dependent phosphoglycerate mutase.